Reading from the N-terminus, the 286-residue chain is Probable protein S-acyltransferase 16 (286 aa).

2 helical membrane-spanning segments follow: residues 11-31 (PVTV…FTFI) and 45-65 (NAAA…IAVF). Residues 97-147 (RYCQKCSHFKPPRAHHCRVCKRCVLRMDHHCIWINNCVGHTNYKVFFVFVV) form the DHHC domain. The S-palmitoyl cysteine intermediate role is filled by Cys127. The next 2 membrane-spanning stretches (helical) occupy residues 141-161 (VFFV…VLLV) and 182-202 (IYVI…VLLG).

This sequence belongs to the DHHC palmitoyltransferase family.

The protein resides in the golgi apparatus membrane. It carries out the reaction L-cysteinyl-[protein] + hexadecanoyl-CoA = S-hexadecanoyl-L-cysteinyl-[protein] + CoA. Its function is as follows. Palmitoyl acyltransferase. In Arabidopsis thaliana (Mouse-ear cress), this protein is Probable protein S-acyltransferase 16 (PAT16).